The chain runs to 302 residues: Sulfate adenylyltransferase subunit 2 (302 aa).

This sequence belongs to the PAPS reductase family. CysD subfamily. In terms of assembly, heterodimer composed of CysD, the smaller subunit, and CysN.

The catalysed reaction is sulfate + ATP + H(+) = adenosine 5'-phosphosulfate + diphosphate. The protein operates within sulfur metabolism; hydrogen sulfide biosynthesis; sulfite from sulfate: step 1/3. In terms of biological role, with CysN forms the ATP sulfurylase (ATPS) that catalyzes the adenylation of sulfate producing adenosine 5'-phosphosulfate (APS) and diphosphate, the first enzymatic step in sulfur assimilation pathway. APS synthesis involves the formation of a high-energy phosphoric-sulfuric acid anhydride bond driven by GTP hydrolysis by CysN coupled to ATP hydrolysis by CysD. This chain is Sulfate adenylyltransferase subunit 2, found in Parabacteroides distasonis (strain ATCC 8503 / DSM 20701 / CIP 104284 / JCM 5825 / NCTC 11152).